The primary structure comprises 101 residues: Large ribosomal subunit protein uL24 (101 aa).

Belongs to the universal ribosomal protein uL24 family. Part of the 50S ribosomal subunit.

One of two assembly initiator proteins, it binds directly to the 5'-end of the 23S rRNA, where it nucleates assembly of the 50S subunit. Functionally, one of the proteins that surrounds the polypeptide exit tunnel on the outside of the subunit. This is Large ribosomal subunit protein uL24 from Borreliella burgdorferi (strain ATCC 35210 / DSM 4680 / CIP 102532 / B31) (Borrelia burgdorferi).